The chain runs to 577 residues: Arginine--tRNA ligase (577 aa).

The short motif at 122-132 is the 'HIGH' region element; that stretch reads PNVAKEMHVGH.

Belongs to the class-I aminoacyl-tRNA synthetase family. In terms of assembly, monomer.

It localises to the cytoplasm. It carries out the reaction tRNA(Arg) + L-arginine + ATP = L-arginyl-tRNA(Arg) + AMP + diphosphate. The chain is Arginine--tRNA ligase from Salmonella paratyphi B (strain ATCC BAA-1250 / SPB7).